A 459-amino-acid chain; its full sequence is GTPase Der (459 aa).

2 consecutive EngA-type G domains span residues 3-169 (PLVA…PPKE) and 183-358 (IRLA…DQFR). Residues 9–16 (GRPNVGKS), 56–60 (DTGGF), 119–122 (NKLD), 189–196 (GRPNVGKS), 236–240 (DTAGI), and 301–304 (NKWD) each bind GTP. The 84-residue stretch at 359 to 442 (FRAPTPQLNR…PIRLIFKGRP (84 aa)) folds into the KH-like domain.

The protein belongs to the TRAFAC class TrmE-Era-EngA-EngB-Septin-like GTPase superfamily. EngA (Der) GTPase family. As to quaternary structure, associates with the 50S ribosomal subunit.

Its function is as follows. GTPase that plays an essential role in the late steps of ribosome biogenesis. The polypeptide is GTPase Der (Myxococcus xanthus (strain DK1622)).